A 427-amino-acid polypeptide reads, in one-letter code: Gamma-glutamyl phosphate reductase (427 aa).

Belongs to the gamma-glutamyl phosphate reductase family.

The protein localises to the cytoplasm. It catalyses the reaction L-glutamate 5-semialdehyde + phosphate + NADP(+) = L-glutamyl 5-phosphate + NADPH + H(+). It functions in the pathway amino-acid biosynthesis; L-proline biosynthesis; L-glutamate 5-semialdehyde from L-glutamate: step 2/2. Functionally, catalyzes the NADPH-dependent reduction of L-glutamate 5-phosphate into L-glutamate 5-semialdehyde and phosphate. The product spontaneously undergoes cyclization to form 1-pyrroline-5-carboxylate. This chain is Gamma-glutamyl phosphate reductase, found in Anaeromyxobacter sp. (strain K).